Here is a 334-residue protein sequence, read N- to C-terminus: GTPase Obg (334 aa).

Residues 1–159 (MKFVDSASVR…REIGLELSVM (159 aa)) enclose the Obg domain. Positions 160-332 (ADIGLLGIPN…LVAGLFKLVL (173 aa)) constitute an OBG-type G domain. Residues 166–173 (GIPNAGKS), 191–195 (FTTLH), 212–215 (DIPG), 282–285 (NKID), and 313–315 (SAL) contribute to the GTP site. Positions 173 and 193 each coordinate Mg(2+).

This sequence belongs to the TRAFAC class OBG-HflX-like GTPase superfamily. OBG GTPase family. In terms of assembly, monomer. It depends on Mg(2+) as a cofactor.

The protein localises to the cytoplasm. In terms of biological role, an essential GTPase which binds GTP, GDP and possibly (p)ppGpp with moderate affinity, with high nucleotide exchange rates and a fairly low GTP hydrolysis rate. Plays a role in control of the cell cycle, stress response, ribosome biogenesis and in those bacteria that undergo differentiation, in morphogenesis control. The protein is GTPase Obg of Vesicomyosocius okutanii subsp. Calyptogena okutanii (strain HA).